The sequence spans 292 residues: Acetyl-coenzyme A carboxylase carboxyl transferase subunit beta (292 aa).

The 264-residue stretch at Leu-29–Asn-292 folds into the CoA carboxyltransferase N-terminal domain. Cys-33, Cys-36, Cys-52, and Cys-55 together coordinate Zn(2+). The C4-type zinc finger occupies Cys-33 to Cys-55.

Belongs to the AccD/PCCB family. In terms of assembly, acetyl-CoA carboxylase is a heterohexamer composed of biotin carboxyl carrier protein (AccB), biotin carboxylase (AccC) and two subunits each of ACCase subunit alpha (AccA) and ACCase subunit beta (AccD). Requires Zn(2+) as cofactor.

The protein localises to the cytoplasm. The enzyme catalyses N(6)-carboxybiotinyl-L-lysyl-[protein] + acetyl-CoA = N(6)-biotinyl-L-lysyl-[protein] + malonyl-CoA. Its pathway is lipid metabolism; malonyl-CoA biosynthesis; malonyl-CoA from acetyl-CoA: step 1/1. Functionally, component of the acetyl coenzyme A carboxylase (ACC) complex. Biotin carboxylase (BC) catalyzes the carboxylation of biotin on its carrier protein (BCCP) and then the CO(2) group is transferred by the transcarboxylase to acetyl-CoA to form malonyl-CoA. This is Acetyl-coenzyme A carboxylase carboxyl transferase subunit beta from Prochlorococcus marinus subsp. pastoris (strain CCMP1986 / NIES-2087 / MED4).